We begin with the raw amino-acid sequence, 530 residues long: Cytochrome P450 monooxygenase ausG (530 aa).

Residues 31–51 (LLVAYRLPGLLLLFSITIILF) form a helical membrane-spanning segment. C470 serves as a coordination point for heme.

The protein belongs to the cytochrome P450 family. The cofactor is heme.

Its subcellular location is the membrane. It functions in the pathway secondary metabolite biosynthesis; terpenoid biosynthesis. Functionally, cytochrome P450 monooxygenase; part of the gene cluster B that mediates the biosynthesis of the fungal meroterpenoid acetoxydehydroaustin. The first step of the pathway is the synthesis of 3,5-dimethylorsellinic acid by the polyketide synthase ausA. 3,5-dimethylorsellinic acid is then prenylated by the polyprenyl transferase ausN. Further epoxidation by the FAD-dependent monooxygenase ausM and cyclization by the probable terpene cyclase ausL lead to the formation of protoaustinoid A. Protoaustinoid A is then oxidized to spiro-lactone preaustinoid A3 by the combined action of the FAD-binding monooxygenases ausB and ausC, and the dioxygenase ausE. Acid-catalyzed keto-rearrangement and ring contraction of the tetraketide portion of preaustinoid A3 by ausJ lead to the formation of preaustinoid A4. The aldo-keto reductase ausK, with the help of ausH, is involved in the next step by transforming preaustinoid A4 into isoaustinone which is in turn hydroxylated by the P450 monooxygenase ausI to form austinolide. The cytochrome P450 monooxygenase ausG then modifies austinolide to austinol. Austinol is further acetylated to austin by the O-acetyltransferase ausP, which spontaneously changes to dehydroaustin. The cytochrome P450 monooxygenase then converts dehydroaustin is into 7-dehydrodehydroaustin. The hydroxylation catalyzed by ausR permits the second O-acetyltransferase ausQ to add an additional acetyl group to the molecule, leading to the formation of acetoxydehydroaustin. Due to genetic rearrangements of the clusters and the subsequent loss of some enzymes, the end product of the Penicillium brasilianum austinoid biosynthesis clusters is acetoxydehydroaustin. This is Cytochrome P450 monooxygenase ausG from Penicillium brasilianum.